We begin with the raw amino-acid sequence, 1580 residues long: Collagen alpha-1(XVI) chain (1580 aa).

An N-terminal signal peptide occupies residues 1 to 21 (MLTSWAPGLWVLGLWATFSHG). N-linked (GlcNAc...) asparagine glycosylation is present at asparagine 47. Residues 50 to 231 (GFNLIRRLNL…LQQAHIYCDP (182 aa)) form the Laminin G-like domain. A nonhelical region 10 (NC10) region spans residues 232-374 (ELVLEEGCCE…SPDAPLQCVE (143 aa)). A disordered region spans residues 324–547 (RESNVTLGPS…DPAPAWEGLG (224 aa)). Residue asparagine 327 is glycosylated (N-linked (GlcNAc...) asparagine). The 50-residue stretch at 375-424 (GPKGEKGESGDLGPPGLPGPTGQKGQKGEKGDGGLKGLPGKPGRDGRPGE) folds into the Collagen-like 1 domain. Residues 375-509 (GPKGEKGESG…PGTKGEKGDP (135 aa)) are triple-helical region 9 (COL9) with 3 imperfections. Residues 449 to 460 (PGPPGLPGPPGI) are compositionally biased toward pro residues. The segment covering 486-495 (GKEGPGGKPG) has biased composition (gly residues). The tract at residues 510-524 (CEVCPTLPEGSQNFV) is nonhelical region 9 (NC9). Residues 525–570 (GLPGKPGPKGEPGDPAPAWEGLGTVGLKGDRGDPGIQGMKGEKGEP) form a triple-helical region 8 (COL8) with 1 imperfection region. The short motif at 555 to 557 (RGD) is the Cell attachment site element. Residues 571–586 (CSSCSSGVGAQHLGPS) are nonhelical region 8 (NC8). Residues 585-598 (PSPGHGLPGLPGTS) show a composition bias toward low complexity. Residues 585-935 (PSPGHGLPGL…LPGQPGLTAE (351 aa)) are disordered. Positions 587–640 (PGHGLPGLPGTSGIPGPRGLKGEKGSFGDTGPAGVPGSPGPVGPAGIKGAKGEP) are triple-helical region 7 (COL7) with 1 imperfection. 2 consecutive Collagen-like domains span residues 590-643 (GLPG…PCEP) and 676-725 (GLPG…PAGP). The interval 641–661 (CEPCTALSELQDGDMRVVHLP) is nonhelical region 7 (NC7). The interval 662–732 (GPAGEKGEPG…AGPKGEKGDG (71 aa)) is triple-helical region 6 (COL6) with 1 imperfection. Residues 683–693 (KAGERGLKGQK) are compositionally biased toward basic and acidic residues. Low complexity predominate over residues 698–714 (NPGDPGTPGITGQPGIS). Positions 733-747 (CTACPSLQGALTDVS) are nonhelical region 6 (NC6). The interval 748-870 (GLPGKPGPKG…RGEKGEPGEC (123 aa)) is triple-helical region 5 (COL5) with 3 imperfections. The Collagen-like 4 domain maps to 797–848 (GAEGPQGEPGTQGLPGTQGLPGPRGPPGSAGEKGAQGSPGPKGAIGPMGPPG). Residues 801 to 817 (PQGEPGTQGLPGTQGLP) show a composition bias toward low complexity. Residues 871-881 (SCPSRGEPIFS) are nonhelical region 5 (NC5). The triple-helical region 4 (COL4) with 2 imperfections stretch occupies residues 882 to 933 (GMPGAPGLWMGSSSQPGPQGPPGVPGPPGPPGMPGLQGVPGHNGLPGQPGLT). Residues 899–914 (PQGPPGVPGPPGPPGM) are compositionally biased toward pro residues. Positions 934-967 (AELGSLPIEKHLLKSICGDCAQGQTAHPAFLLEK) are nonhelical region 4 (NC4). The triple-helical region 3 (COL3) stretch occupies residues 968 to 982 (GEKGDQGIPGVPGFD). The nonhelical region 3 (NC3) stretch occupies residues 983 to 1005 (NCARCFIERERPRAEEARGDNSE). Disordered regions lie at residues 995-1405 (RAEE…LPGS) and 1445-1523 (AAAP…GYGK). A Cell attachment site motif is present at residues 1000–1002 (RGD). A Collagen-like 5 domain is found at 1006–1063 (GEPGCSGSPGLPGPPGMPGQRGEEGPPGMRGSPGPPGPIGLQGERGLTGLTGDKGEPG). Residues 1006–1409 (GEPGCSGSPG…PGLPGSMGDM (404 aa)) are triple-helical region 2 (COL2) with 2 imperfections. Residues 1098–1107 (SGPPGSEGLP) show a composition bias toward low complexity. Composition is skewed to pro residues over residues 1139–1148 (FPGPPGPPGF) and 1178–1187 (SPGPPGPPGI). A compositionally biased stretch (basic and acidic residues) spans 1196 to 1205 (LDGKDGKPGL). Positions 1206-1208 (RGD) match the Cell attachment site motif. Positions 1210 to 1263 (GPAGPPGLMGPPGFKGKTGHPGLPGPKGDCGKPGPPGSSGRPGAEGEPGAMGPQ) constitute a Collagen-like 6 domain. The segment covering 1247–1263 (SSGRPGAEGEPGAMGPQ) has biased composition (low complexity). Residues 1265–1281 (RPGPPGHLGPPGQPGPP) are compositionally biased toward pro residues. Collagen-like domains lie at 1350 to 1407 (GQKG…GSMG), 1448 to 1500 (PGRP…GDIG), and 1504 to 1552 (AGEN…GKAG). Residues 1362–1371 (GMPGGPGKSG) are compositionally biased toward gly residues. Residues 1396–1405 (NPGLPGLPGS) show a composition bias toward low complexity. The tract at residues 1410 to 1448 (VNYDDIKRFIRQEIIKLFDERMAYYTSRMQFPMEVAAAP) is nonhelical region 2 (NC2). The tract at residues 1449–1554 (GRPGPPGKDG…MGQPGKAGHC (106 aa)) is triple-helical region 1 (COL1) with 2 imperfections. The interval 1555–1580 (NPSDCFGAMPMEQQYPPMKSMKGPFG) is nonhelical region 1 (NC1).

Belongs to the fibril-associated collagens with interrupted helices (FACIT) family. Homotrimer. Interacts with FBN1, fibronectin and integrins ITGA1/ITGB1 and ITGA2/ITGB1. Integrin ITGA1/ITGB1 binds to a unique site within COL16A1 located close to its C-terminal end between collagenous domains COL1-COL3. In terms of processing, prolines at the third position of the tripeptide repeating unit (G-X-Y) are hydroxylated in some or all of the chains. Glycosylated. In terms of tissue distribution, expressed in most tissues examined with highest levels of expression observed in heart. Strongly expressed in cortical and medullar regions of kidney and more weakly expressed in lung. Also detected in the ciliary muscle of the eye, on the serosa layer lining the muscularis externa of intestinal tissue, and in the perimysium membrane lining both the cardiac muscle bundle and the smooth muscle tissue of the small intestine. Strongly stained in particulate or granular structures. Not detected in brain or skeletal muscle.

The protein localises to the secreted. It is found in the extracellular space. The protein resides in the extracellular matrix. In terms of biological role, involved in mediating cell attachment and inducing integrin-mediated cellular reactions, such as cell spreading and alterations in cell morphology. The chain is Collagen alpha-1(XVI) chain from Mus musculus (Mouse).